The chain runs to 812 residues: Xaa-Pro dipeptidyl-peptidase (812 aa).

Residues Ser-372, Asp-492, and His-523 each act as charge relay system in the active site.

This sequence belongs to the peptidase S15 family. Homodimer.

The protein localises to the cytoplasm. It catalyses the reaction Hydrolyzes Xaa-Pro-|- bonds to release unblocked, N-terminal dipeptides from substrates including Ala-Pro-|-p-nitroanilide and (sequentially) Tyr-Pro-|-Phe-Pro-|-Gly-Pro-|-Ile.. Its function is as follows. Removes N-terminal dipeptides sequentially from polypeptides having unsubstituted N-termini provided that the penultimate residue is proline. This is Xaa-Pro dipeptidyl-peptidase from Pediococcus pentosaceus (strain ATCC 25745 / CCUG 21536 / LMG 10740 / 183-1w).